The following is a 431-amino-acid chain: Glutamate-1-semialdehyde 2,1-aminomutase (431 aa).

Position 265 is an N6-(pyridoxal phosphate)lysine (K265).

Belongs to the class-III pyridoxal-phosphate-dependent aminotransferase family. HemL subfamily. Homodimer. Pyridoxal 5'-phosphate serves as cofactor.

It localises to the cytoplasm. It carries out the reaction (S)-4-amino-5-oxopentanoate = 5-aminolevulinate. The protein operates within porphyrin-containing compound metabolism; protoporphyrin-IX biosynthesis; 5-aminolevulinate from L-glutamyl-tRNA(Glu): step 2/2. The protein is Glutamate-1-semialdehyde 2,1-aminomutase of Vibrio vulnificus (strain CMCP6).